The chain runs to 365 residues: Succinyl-diaminopimelate desuccinylase (365 aa).

A Zn(2+)-binding site is contributed by His64. Asp66 is an active-site residue. Zn(2+) is bound at residue Asp95. Glu125 (proton acceptor) is an active-site residue. Residues Glu126, Glu154, and His339 each coordinate Zn(2+).

It belongs to the peptidase M20A family. DapE subfamily. Homodimer. It depends on Zn(2+) as a cofactor. Requires Co(2+) as cofactor.

The catalysed reaction is N-succinyl-(2S,6S)-2,6-diaminopimelate + H2O = (2S,6S)-2,6-diaminopimelate + succinate. Its pathway is amino-acid biosynthesis; L-lysine biosynthesis via DAP pathway; LL-2,6-diaminopimelate from (S)-tetrahydrodipicolinate (succinylase route): step 3/3. Its function is as follows. Catalyzes the hydrolysis of N-succinyl-L,L-diaminopimelic acid (SDAP), forming succinate and LL-2,6-diaminopimelate (DAP), an intermediate involved in the bacterial biosynthesis of lysine and meso-diaminopimelic acid, an essential component of bacterial cell walls. This chain is Succinyl-diaminopimelate desuccinylase, found in Sulfurimonas denitrificans (strain ATCC 33889 / DSM 1251) (Thiomicrospira denitrificans (strain ATCC 33889 / DSM 1251)).